Consider the following 303-residue polypeptide: Protoheme IX farnesyltransferase (303 aa).

Transmembrane regions (helical) follow at residues 25-45 (MGLVQGNLIPAFAGSWLAIVL), 54-74 (IPQILLMLIGSTLIMGGACAL), 104-124 (LLILSFGMMVIGEIALFILNI), 125-145 (PSGVIGLMGIIGYVSFYSIWS), 151-171 (WNTVIGAFPGAVPPVIGWTAI), 179-199 (AIALFLVIFCWQPIHFYALAI), 228-248 (VWLILLLPLPFLLSDLGPVFI), and 280-300 (FVYSLNYLVLFFALVVIISLI).

This sequence belongs to the UbiA prenyltransferase family. Protoheme IX farnesyltransferase subfamily. In terms of assembly, interacts with CtaA.

The protein localises to the cell membrane. The enzyme catalyses heme b + (2E,6E)-farnesyl diphosphate + H2O = Fe(II)-heme o + diphosphate. It participates in porphyrin-containing compound metabolism; heme O biosynthesis; heme O from protoheme: step 1/1. Converts heme B (protoheme IX) to heme O by substitution of the vinyl group on carbon 2 of heme B porphyrin ring with a hydroxyethyl farnesyl side group. The sequence is that of Protoheme IX farnesyltransferase from Staphylococcus carnosus (strain TM300).